We begin with the raw amino-acid sequence, 379 residues long: Homeobox protein SBH1 (379 aa).

A disordered region spans residues 75–125; sequence NNHNNNKTDDDDNNNNTGLGYYFMESDHHHHHHGNNNNNGSSSSSSSSAVK. Positions 109 to 122 are enriched in low complexity; the sequence is NNNNNGSSSSSSSS. Residues 261–281 enclose the ELK domain; the sequence is DLKGQLLRKYSGYLGSLKQEF. A DNA-binding region (homeobox; TALE-type) is located at residues 282–345; it reads MKKRKKGKLP…NQRKRHWKPS (64 aa).

The protein belongs to the TALE/KNOX homeobox family. In terms of tissue distribution, expressed mainly in embryonic tissues. Weakly detected in stems and hypocotyl.

It is found in the nucleus. Its function is as follows. Possible transcription activator involved in early embryonic development. Probably binds to the DNA sequence 5'-TGAC-3'. The protein is Homeobox protein SBH1 (H1) of Glycine max (Soybean).